Consider the following 349-residue polypeptide: Draxin (349 aa).

The first 25 residues, 1–25 (MAASSTFFSPSLFLCVLVLIDITLA), serve as a signal peptide directing secretion. A compositionally biased stretch (polar residues) spans 40-53 (NHLQNQETWPQQPR). Disordered stretches follow at residues 40-63 (NHLQ…HGLA), 119-166 (PHAE…LYKK), and 246-273 (WPSA…EGEP). Residues 54-63 (SGHHHKHGLA) are compositionally biased toward basic residues. Positions 119–139 (PHAERENQSPGSERGKKQNRE) are enriched in basic and acidic residues. 2 stretches are compositionally biased toward basic residues: residues 140–155 (QRRH…HRGK) and 249–258 (AKKKEKRRSK). The N-linked (GlcNAc...) asparagine glycan is linked to N264.

The protein belongs to the draxin family.

Its subcellular location is the secreted. In terms of biological role, chemorepulsive axon guidance protein required for the development of spinal cord and forebrain commissures. Acts as a chemorepulsive guidance protein for commissural axons during development. Able to inhibit or repel neurite outgrowth from dorsal spinal cord and cortical explants in vitro. Binds directly to the neurites and growth cones. The sequence is that of Draxin from Gallus gallus (Chicken).